The following is a 350-amino-acid chain: Dauer larva development regulatory growth factor daf-7 (350 aa).

The first 21 residues, Met-1 to Thr-21, serve as a signal peptide directing secretion. Residues Phe-22–Arg-234 constitute a propeptide that is removed on maturation. The N-linked (GlcNAc...) asparagine glycan is linked to Asn-23. Cystine bridges form between Cys-241–Cys-251, Cys-250–Cys-315, Cys-278–Cys-347, and Cys-282–Cys-349.

This sequence belongs to the TGF-beta family. In terms of tissue distribution, expressed in the chemosensory neurons, including in the ASJ neurons in males. Expressed in the ASI neurons.

Its subcellular location is the secreted. Its function is as follows. Under harsh environmental conditions, larvae enter a developmentally arrested state known as dauer; TGF-beta-like daf-7 acts to inhibit dauer larva formation and promote growth. May be a ligand to cell surface receptor daf-4. May act as a negative regulator of dauer larva development by transducing chemosensory information from ASI neurons. Involved in sensitivity to CO2 levels. Involved in mate searching behavior of males, acting in concert with the neuropeptide pdf-1. In AWC neurons, acts to promote expression of srsx-3, a member of the GPCR family. This chain is Dauer larva development regulatory growth factor daf-7, found in Caenorhabditis elegans.